Reading from the N-terminus, the 589-residue chain is Protein sprouty (589 aa).

3 disordered regions span residues M1 to H37, R102 to S194, and L239 to G320. 2 stretches are compositionally biased toward low complexity: residues S104 to S135 and N148 to N162. Residues F163–P172 show a composition bias toward polar residues. Over residues L239–H272 the composition is skewed to low complexity. Positions A276–S286 are enriched in polar residues. In terms of domain architecture, SPR spans R380–C499.

Belongs to the sprouty family. As to quaternary structure, interacts with DRK and RasGAP1 proteins of the Ras pathway. As to expression, in ovary, expressed from stage 7 of oogenesis in the posterior follicle cells and during stage 9 when the follicle cells migrate posteriorly over the oocyte nucleus, expression is seen in the dorsal and lateral cells and is excluded from the ventral cells. Once the migration of follicle cells is complete expressed in the dorsal-anterior corner of the egg chamber. Expressed in the embryonic tracheal system, developing eye imaginal disk, embryonic chordotonal organ precursors, midline glia and wing imaginal disk.

The protein resides in the cell membrane. In terms of biological role, inhibitor of tracheal branching that restricts branch budding by antagonizing the BNL-FGF pathway (BNL: branchless, an fgf inducer of branching). Acts as an antagonist of EGFR-mediated signaling in the eye (where it is important for cell determination) midline glia, chordotonal organs, wing and ovarian follicle cells. This is Protein sprouty (sty) from Drosophila melanogaster (Fruit fly).